Reading from the N-terminus, the 178-residue chain is ATP synthase subunit delta (178 aa).

This sequence belongs to the ATPase delta chain family. As to quaternary structure, F-type ATPases have 2 components, F(1) - the catalytic core - and F(0) - the membrane proton channel. F(1) has five subunits: alpha(3), beta(3), gamma(1), delta(1), epsilon(1). F(0) has three main subunits: a(1), b(2) and c(10-14). The alpha and beta chains form an alternating ring which encloses part of the gamma chain. F(1) is attached to F(0) by a central stalk formed by the gamma and epsilon chains, while a peripheral stalk is formed by the delta and b chains.

Its subcellular location is the cell inner membrane. Its function is as follows. F(1)F(0) ATP synthase produces ATP from ADP in the presence of a proton or sodium gradient. F-type ATPases consist of two structural domains, F(1) containing the extramembraneous catalytic core and F(0) containing the membrane proton channel, linked together by a central stalk and a peripheral stalk. During catalysis, ATP synthesis in the catalytic domain of F(1) is coupled via a rotary mechanism of the central stalk subunits to proton translocation. In terms of biological role, this protein is part of the stalk that links CF(0) to CF(1). It either transmits conformational changes from CF(0) to CF(1) or is implicated in proton conduction. The chain is ATP synthase subunit delta from Methylobacillus flagellatus (strain ATCC 51484 / DSM 6875 / VKM B-1610 / KT).